The sequence spans 353 residues: Peroxisome assembly protein 12-B (353 aa).

Residues 1 to 19 (MAERGAHITTTSPLDDRPS) are Peroxisomal matrix-facing. A helical membrane pass occupies residues 20–47 (IFEVVAQESLMAAARPALHHIVKVLAES). Residues 48-51 (NPAR) are Cytoplasmic-facing. A helical transmembrane segment spans residues 52–76 (YGTLWRWFDELYTLLECLLQQHYLS). Residues 77-104 (WASASFSENFYGLKRVTLGKQVGQRNLA) lie on the Peroxisomal matrix side of the membrane. The helical transmembrane segment at 105–134 (RKEYWKSLLLLVLIPYLRIKLEKLVNSLRE) threads the bilayer. At 135-139 (EEDYS) the chain is on the cytoplasmic side. A helical membrane pass occupies residues 140–178 (IQNPTSFHKRCYKAILASYPFLKLGWEAWFLFYQLRYIL). The Peroxisomal matrix portion of the chain corresponds to 179 to 243 (WNGKHHSPLL…LGAVTLSVSS (65 aa)). The helical transmembrane segment at 244–271 (SLSLGVFFLQFLDWWYSAENRETLKSLG) threads the bilayer. Topologically, residues 272 to 353 (NLPVPPPPIH…HLIKLYTPDG (82 aa)) are cytoplasmic. C298, C301, C319, and C322 together coordinate Zn(2+). Residues 298 to 337 (CPLCRKVRVNDTALGTSGYVFCYRCAYYYVKTHQRCPVSG) form an RING-type; degenerate zinc finger.

The protein belongs to the pex2/pex10/pex12 family. As to quaternary structure, component of the PEX2-PEX10-PEX12 retrotranslocation channel.

It localises to the peroxisome membrane. The protein operates within protein modification; protein ubiquitination. Functionally, component of a retrotranslocation channel required for peroxisome organization by mediating export of the PEX5 receptor from peroxisomes to the cytosol, thereby promoting PEX5 recycling. The retrotranslocation channel is composed of PEX2, PEX10 and PEX12; each subunit contributing transmembrane segments that coassemble into an open channel that specifically allows the passage of PEX5 through the peroxisomal membrane. PEX12 also regulates PEX5 recycling by activating the E3 ubiquitin-protein ligase activity of PEX10. When PEX5 recycling is compromised, PEX12 stimulates PEX10-mediated polyubiquitination of PEX5, leading to its subsequent degradation. The chain is Peroxisome assembly protein 12-B from Xenopus laevis (African clawed frog).